The chain runs to 364 residues: uncharacterized protein (364 aa).

3 helical membrane passes run 41–61 (NIFT…FFGL), 298–318 (VIYI…ITYM), and 329–349 (LLFY…SIII).

The protein resides in the membrane. This is an uncharacterized protein from Mycoplasma capricolum subsp. capricolum (strain California kid / ATCC 27343 / NCTC 10154).